Consider the following 509-residue polypeptide: 2-isopropylmalate synthase (509 aa).

The 263-residue stretch at 5 to 267 (IQIFDTTLRD…QTALNLEETK (263 aa)) folds into the Pyruvate carboxyltransferase domain. Mn(2+)-binding residues include Asp-14, His-202, His-204, and Asn-238. The segment at 391–509 (KLETLQLQYV…AAENVEKVGN (119 aa)) is regulatory domain.

Belongs to the alpha-IPM synthase/homocitrate synthase family. LeuA type 1 subfamily. Homodimer. Mn(2+) is required as a cofactor.

It is found in the cytoplasm. The catalysed reaction is 3-methyl-2-oxobutanoate + acetyl-CoA + H2O = (2S)-2-isopropylmalate + CoA + H(+). The protein operates within amino-acid biosynthesis; L-leucine biosynthesis; L-leucine from 3-methyl-2-oxobutanoate: step 1/4. Catalyzes the condensation of the acetyl group of acetyl-CoA with 3-methyl-2-oxobutanoate (2-ketoisovalerate) to form 3-carboxy-3-hydroxy-4-methylpentanoate (2-isopropylmalate). The protein is 2-isopropylmalate synthase of Staphylococcus aureus (strain bovine RF122 / ET3-1).